The primary structure comprises 693 residues: Follicle-stimulating hormone receptor (693 aa).

A signal peptide spans 1 to 18 (MFLVFTCSLILLASCSSC). Cystine bridges form between C18-C25 and C23-C32. The LRRNT domain maps to 19–46 (QHHTCHCAGRIFICQESKVVQLPRDIPT). The Extracellular portion of the chain corresponds to 19 to 366 (QHHTCHCAGR…EDIMGYTILR (348 aa)). Residue N47 is glycosylated (N-linked (GlcNAc...) asparagine). LRR repeat units follow at residues 49 to 72 (TELR…LLDL), 73 to 97 (EKIE…LPKL), 98 to 118 (HEIR…AFQH), 119 to 143 (LPSL…KVHS), 144 to 169 (FQKV…MGLS), 170 to 192 (SESV…AFNG), 193 to 216 (TYLD…VFQG), 217 to 240 (ANGP…GLEL), and 241 to 259 (IKKL…PDLS). N191 and N199 each carry an N-linked (GlcNAc...) asparagine glycan. N268 carries an N-linked (GlcNAc...) asparagine glycan. Intrachain disulfides connect C275/C346, C276/C292, C276/C356, and C292/C338. A helical transmembrane segment spans residues 367–387 (VLIWFISILAITGNIVVLIIL). Residues 388-398 (ISSQYKLTVPR) are Cytoplasmic-facing. A helical transmembrane segment spans residues 399 to 421 (FLMCNLAFADLCIGIYLLFIASV). The Extracellular segment spans residues 422 to 443 (DIQTKSQYYNYAIDWQTGAGCN). A disulfide bridge links C442 with C517. A helical transmembrane segment spans residues 444-465 (AAGFFTVFASELSVYTLTVITL). The Cytoplasmic segment spans residues 466–485 (ERWHTITYAMQLDRKVRFRH). Residues 486–508 (AVIIMIFGWMFAFTVALLPIFGV) traverse the membrane as a helical segment. Over 509–528 (SSYMKVSICLPMDIETPFSQ) the chain is Extracellular. Residues 529–550 (AYVIFLLVLNVLAFVIICACYI) form a helical membrane-spanning segment. At 551-573 (CIYFTVRNPNVISSNSDTKIAKR) the chain is on the cytoplasmic side. A helical transmembrane segment spans residues 574 to 597 (MAILIFTDFLCMAPISFFAISASL). The Extracellular portion of the chain corresponds to 598-608 (KVPLITVSKSK). A helical transmembrane segment spans residues 609–630 (ILLVLFYPINSCANPFLYAIFT). Residues 631–693 (KTFRRDFFIL…YSLVPLNHLN (63 aa)) are Cytoplasmic-facing.

This sequence belongs to the G-protein coupled receptor 1 family. FSH/LSH/TSH subfamily. Homotrimer. Functions as a homotrimer binding the FSH hormone heterodimer composed of CGA and FSHB.

Its subcellular location is the cell membrane. In terms of biological role, g protein-coupled receptor for follitropin, the follicle-stimulating hormone. Through cAMP production activates the downstream PI3K-AKT and ERK1/ERK2 signaling pathways. This chain is Follicle-stimulating hormone receptor (FSHR), found in Cairina moschata (Muscovy duck).